A 215-amino-acid chain; its full sequence is Uracil phosphoribosyltransferase (215 aa).

Residue 30–34 (KGMVR) participates in GTP binding. Residues arginine 80, arginine 105, and 139-147 (DPMIATAST) each bind 5-phospho-alpha-D-ribose 1-diphosphate. Residues isoleucine 202 and 207–209 (GDA) contribute to the uracil site. A 5-phospho-alpha-D-ribose 1-diphosphate-binding site is contributed by aspartate 208.

Belongs to the UPRTase family. Mg(2+) serves as cofactor.

The catalysed reaction is UMP + diphosphate = 5-phospho-alpha-D-ribose 1-diphosphate + uracil. It participates in pyrimidine metabolism; UMP biosynthesis via salvage pathway; UMP from uracil: step 1/1. Allosterically activated by GTP. Functionally, catalyzes the conversion of uracil and 5-phospho-alpha-D-ribose 1-diphosphate (PRPP) to UMP and diphosphate. This chain is Uracil phosphoribosyltransferase, found in Metallosphaera sedula (strain ATCC 51363 / DSM 5348 / JCM 9185 / NBRC 15509 / TH2).